The chain runs to 460 residues: Proline--tRNA ligase (460 aa).

Belongs to the class-II aminoacyl-tRNA synthetase family. ProS type 3 subfamily. Homodimer.

The protein localises to the cytoplasm. It catalyses the reaction tRNA(Pro) + L-proline + ATP = L-prolyl-tRNA(Pro) + AMP + diphosphate. Its function is as follows. Catalyzes the attachment of proline to tRNA(Pro) in a two-step reaction: proline is first activated by ATP to form Pro-AMP and then transferred to the acceptor end of tRNA(Pro). The sequence is that of Proline--tRNA ligase from Methanococcus maripaludis (strain C6 / ATCC BAA-1332).